Reading from the N-terminus, the 290-residue chain is Eukaryotic translation initiation factor 3 subunit G (290 aa).

The segment covering methionine 1–alanine 12 has biased composition (basic and acidic residues). Disordered regions lie at residues methionine 1–alanine 30 and alanine 173–alanine 192. Positions proline 204–proline 285 constitute an RRM domain.

This sequence belongs to the eIF-3 subunit G family. Component of the eukaryotic translation initiation factor 3 (eIF-3) complex.

It localises to the cytoplasm. Its function is as follows. RNA-binding component of the eukaryotic translation initiation factor 3 (eIF-3) complex, which is involved in protein synthesis of a specialized repertoire of mRNAs and, together with other initiation factors, stimulates binding of mRNA and methionyl-tRNAi to the 40S ribosome. The eIF-3 complex specifically targets and initiates translation of a subset of mRNAs involved in cell proliferation. This subunit can bind 18S rRNA. This Cryptococcus neoformans var. neoformans serotype D (strain B-3501A) (Filobasidiella neoformans) protein is Eukaryotic translation initiation factor 3 subunit G.